The sequence spans 673 residues: Synaptotagmin-like protein 4 (673 aa).

Positions 4-122 constitute a RabBD domain; sequence ILDLSFLSEM…KATGDWFYDQ (119 aa). Residues 63–105 form an FYVE-type zinc finger; sequence CARCQEGLGRLIPKSSTCVGCNHLVCRECRVLESNGSWRCKVC. Positions 184–253 are disordered; that stretch reads FEVPKTRSGK…PGNQNAVCGD (70 aa). S202, S205, S218, S222, and S275 each carry phosphoserine. One can recognise a C2 1 domain in the interval 358–480; sequence VTGKIAFSLK…KLDKKLDHCL (123 aa). The residue at position 490 (S490) is a Phosphoserine. The region spanning 509 to 635 is the C2 2 domain; the sequence is PASKLPVGGD…ISNGEVVDWM (127 aa).

As to quaternary structure, part of a ternary complex containing STX1A and RAB27A. Can bind both dominant negative and dominant active mutants of RAB27A. Binds STXBP1, RAB3A, RAB8A and RAB27B. Interacts with MYO5A. Detected in the pancreatic islet, in particular in insulin-positive beta cells, and in pituitary.

It localises to the membrane. It is found in the cytoplasmic vesicle. The protein resides in the secretory vesicle membrane. Its function is as follows. Modulates exocytosis of dense-core granules and secretion of hormones in the pancreas and the pituitary. Interacts with vesicles containing negatively charged phospholipids in a Ca(2+)-independent manner. The polypeptide is Synaptotagmin-like protein 4 (Sytl4) (Mus musculus (Mouse)).